A 294-amino-acid polypeptide reads, in one-letter code: Epimerase family protein SDR39U1 (294 aa).

NADP(+)-binding positions include 31-32 (SR), 58-59 (LA), E77, R82, and V160.

This sequence belongs to the NAD(P)-dependent epimerase/dehydratase family. SDR39U1 subfamily.

Its function is as follows. Putative NADP-dependent oxidoreductase. The chain is Epimerase family protein SDR39U1 (SDR39U1) from Bos taurus (Bovine).